Consider the following 136-residue polypeptide: Biopolymer transport protein exbD2 (136 aa).

Topologically, residues 1–23 (MAFSTGGNRGPMADINVTPLVDV) are cytoplasmic. The helical transmembrane segment at 24 to 44 (MLVLLIIFIVTAPIMTYPIAV) threads the bilayer. Residues 45–136 (DLPQRVLNPP…SQMKKIGFMQ (92 aa)) are Periplasmic-facing.

Belongs to the ExbD/TolR family. The accessory proteins ExbB and ExbD seem to form a complex with TonB.

The protein resides in the cell inner membrane. Its function is as follows. Involved in the TonB-dependent energy-dependent transport of various receptor-bound substrates. The protein is Biopolymer transport protein exbD2 (exbD2) of Xanthomonas campestris pv. campestris (strain ATCC 33913 / DSM 3586 / NCPPB 528 / LMG 568 / P 25).